The sequence spans 603 residues: ATP-dependent zinc metalloprotease FtsH (603 aa).

The Stromal segment spans residues 1-2 (MK). The helical transmembrane segment at 3 to 23 (NLWIWSLPLIVLAFIGWQELA) threads the bilayer. Over 24–101 (NQMPVATSRM…DVDVHAVSNW (78 aa)) the chain is Lumenal. Residues 102-122 (INVASNWIIPLIIIGVVIWLL) form a helical membrane-spanning segment. At 123-603 (SRSASSNTTG…SQAARLTAVN (481 aa)) the chain is on the stromal side. 194 to 201 (GPPGTGKT) is an ATP binding site. H415 is a binding site for Zn(2+). The active site involves E416. Residues H419 and D493 each contribute to the Zn(2+) site.

The protein in the central section; belongs to the AAA ATPase family. It in the C-terminal section; belongs to the peptidase M41 family. In terms of assembly, homohexamer. The cofactor is Zn(2+).

The protein resides in the plastid. It is found in the chloroplast thylakoid membrane. Acts as a processive, ATP-dependent zinc metallopeptidase. The protein is ATP-dependent zinc metalloprotease FtsH of Cyanidioschyzon merolae (strain NIES-3377 / 10D) (Unicellular red alga).